The primary structure comprises 372 residues: Cytochrome b (372 aa).

4 helical membrane passes run 25–45 (FGSM…FLSM), 69–90 (WMMQ…YIHV), 105–125 (WLSG…GYVL), and 170–190 (FFAL…LHIM). The heme b site is built by histidine 75 and histidine 89. Residues histidine 174 and histidine 188 each contribute to the heme b site. Histidine 193 provides a ligand contact to a ubiquinone. 4 helical membrane passes run 218–238 (YKDL…ISFI), 280–300 (LGGA…PFTH), 312–332 (FMQL…WTAT), and 339–358 (YTMI…MSNP).

Belongs to the cytochrome b family. In terms of assembly, the cytochrome bc1 complex contains 3 respiratory subunits (MT-CYB, CYC1 and UQCRFS1), 2 core proteins (UQCRC1 and UQCRC2) and probably 6 low-molecular weight proteins. Requires heme b as cofactor.

The protein localises to the mitochondrion inner membrane. Component of the ubiquinol-cytochrome c reductase complex (complex III or cytochrome b-c1 complex) that is part of the mitochondrial respiratory chain. The b-c1 complex mediates electron transfer from ubiquinol to cytochrome c. Contributes to the generation of a proton gradient across the mitochondrial membrane that is then used for ATP synthesis. This is Cytochrome b (MT-CYB) from Acrantophis madagascariensis (Madagascar ground boa).